A 342-amino-acid polypeptide reads, in one-letter code: Serpentine receptor class beta-16 (342 aa).

Residues 1-22 are Extracellular-facing; it reads MDRELIEICKENSATAFSVGYQ. A helical transmembrane segment spans residues 23–43; the sequence is IVYLIYVVLSVTSIFTCSYFI. The Cytoplasmic segment spans residues 44 to 61; the sequence is KTFIWNSTFHPNFKLLLT. The helical transmembrane segment at 62-82 threads the bilayer; the sequence is MYFFAAIFHSFLFTASYLMMI. At 83-102 the chain is on the extracellular side; that stretch reads ERFLDYQTDCDIHVSMVPYA. Residues 103 to 123 form a helical membrane-spanning segment; the sequence is IVHSSIACCLFCGMLTQVFMV. At 124–141 the chain is on the cytoplasmic side; the sequence is IERLLATIKIESYEHNTS. A helical transmembrane segment spans residues 142–162; the sequence is FWHILAYLFFCIVLPLSLLVW. The Extracellular segment spans residues 163-187; sequence AYQDADYNSPVITAISPPKGVEIRL. The helical transmembrane segment at 188–208 threads the bilayer; the sequence is NILYIFCFFLAILALILLQVV. Residues 209-237 are Cytoplasmic-facing; the sequence is RFVNKRRESRIEISLSGRFQIVENIDTTT. Residues 238 to 258 form a helical membrane-spanning segment; the sequence is FISSILIINMIMSVIYIVGTF. Over 259–274 the chain is Extracellular; that stretch reads TLRNFQFDAFINNQPA. Residues 275-295 form a helical membrane-spanning segment; it reads LATVKTIFYLHPLFSFLMPLI. Over 296 to 342 the chain is Cytoplasmic; it reads SSYHLSKMRERRVKRREHLMAIKTKGREGSDAYNQLLHDQWTQHFLK.

This sequence belongs to the nematode receptor-like protein srb family. As to expression, expressed throughout the nervous system, in pharyngeal muscle, hermaphrodite vulval muscles and in the male tail. Not expressed in male somatic gonads or sperm.

It is found in the cell membrane. It localises to the perikaryon. The protein localises to the cell projection. The protein resides in the dendrite. Functionally, G-protein coupled receptor. Plays a role in the navigational capacity of sperm and promotes the targeting of sperm derived from males to the fertilization site in the uterus of hermaphrodites. The protein is Serpentine receptor class beta-16 of Caenorhabditis elegans.